Reading from the N-terminus, the 197-residue chain is DNA helicase/primase complex protein (197 aa).

This sequence belongs to the herpesviridae UL52 family.

Its function is as follows. Involved in DNA replication. This is DNA helicase/primase complex protein (7) from Equus caballus (Horse).